The chain runs to 172 residues: Scytalone dehydratase-like protein Arp1 (172 aa).

Y49 is a substrate binding site. Active-site residues include H84 and H109. N130 contributes to the substrate binding site.

It belongs to the scytalone dehydratase family. Homotrimer. Each subunit contains an active site, located in the central part of the hydrophobic core of the monomer, which functions independently.

In terms of biological role, scytalone dehydratase-like protein; part of the Pks2 gene cluster that mediates the formation of infectious structures (appressoria), enabling these fungi to kill insects faster. The product of the Pks2 gene cluster is different from the one of Pks1 and has still not been identified. This Metarhizium guizhouense (strain ARSEF 977) protein is Scytalone dehydratase-like protein Arp1.